A 146-amino-acid polypeptide reads, in one-letter code: MEIILKQDVQNLGFKDDVVSVKPGYGRNFLIPQGFATLATPSAKKVLAENLKQRAHKEAKIVADAKALAETLKALEIKLTAKAGGEKLFGSITNIDIAEALEKSGNAIDRKFITSGVVKRIGKYNATVRLHRDVIVELPYEIVAEK.

This sequence belongs to the bacterial ribosomal protein bL9 family.

Its function is as follows. Binds to the 23S rRNA. The sequence is that of Large ribosomal subunit protein bL9 from Flavobacterium johnsoniae (strain ATCC 17061 / DSM 2064 / JCM 8514 / BCRC 14874 / CCUG 350202 / NBRC 14942 / NCIMB 11054 / UW101) (Cytophaga johnsonae).